The primary structure comprises 65 residues: Large ribosomal subunit protein bL35 (65 aa).

It belongs to the bacterial ribosomal protein bL35 family.

This Thermoanaerobacter pseudethanolicus (strain ATCC 33223 / 39E) (Clostridium thermohydrosulfuricum) protein is Large ribosomal subunit protein bL35.